The following is a 475-amino-acid chain: MSPQTETKAGVGFKAGVKDYKLTYYTPDYETKDTDILAAFRVTPQPGVPPEEAGAAVAAESSTGTWTTVWTDGLTSLDRYKGRCYDIEPVAGEENQFIAYVAYPLDLFEEGSVTNMFTSIVGNVFGFKALRALRLEDLRIPPAYVKTFQGPPHGIQVERDKLNKYGRPLLGCTIKPKLGLSAKNYGRAVYECLRGGLDFTKDDENVNSQPFMRWRDRFLFCAEALYKAQAETGEIKGHYLNATAGTCEEMIKRAVFARELGVPIVMHDYLTGGFTANTSLAHYCRDNGLLLHIHRAMHAVIDRQKNHGIHFRVLAKALRMSGGDHIHSGTVVGKLEGERDITLGFVDLLRDDFVEKDRSRGIYFTQDWVSLPGVLPVASGGIHVWHMPALTEIFGDDSVLQFGGGTLGHPWGNAPGAVANRVALEACVQARNEGRDLAREGNEIIREASKWSPELAAACEVWKEIKFEFQAMDTL.

Positions Met1 to Ser2 are excised as a propeptide. N-acetylproline is present on Pro3. Lys14 carries the N6,N6,N6-trimethyllysine modification. Residues Asn123 and Thr173 each coordinate substrate. Residue Lys175 is the Proton acceptor of the active site. Lys177 contributes to the substrate binding site. Mg(2+) contacts are provided by Lys201, Asp203, and Glu204. Lys201 carries the post-translational modification N6-carboxylysine. The active-site Proton acceptor is His294. Substrate is bound by residues Arg295, His327, and Ser379.

Belongs to the RuBisCO large chain family. Type I subfamily. As to quaternary structure, heterohexadecamer of 8 large chains and 8 small chains; disulfide-linked. The disulfide link is formed within the large subunit homodimers. Requires Mg(2+) as cofactor. In terms of processing, the disulfide bond which can form in the large chain dimeric partners within the hexadecamer appears to be associated with oxidative stress and protein turnover.

It localises to the plastid. The protein resides in the chloroplast. The enzyme catalyses 2 (2R)-3-phosphoglycerate + 2 H(+) = D-ribulose 1,5-bisphosphate + CO2 + H2O. The catalysed reaction is D-ribulose 1,5-bisphosphate + O2 = 2-phosphoglycolate + (2R)-3-phosphoglycerate + 2 H(+). RuBisCO catalyzes two reactions: the carboxylation of D-ribulose 1,5-bisphosphate, the primary event in carbon dioxide fixation, as well as the oxidative fragmentation of the pentose substrate in the photorespiration process. Both reactions occur simultaneously and in competition at the same active site. The chain is Ribulose bisphosphate carboxylase large chain from Populus trichocarpa (Western balsam poplar).